The primary structure comprises 974 residues: Probable proton ATPase 1A (974 aa).

Positions 1-23 (MSSKKYELDAAAFEDKPESHSDA) are enriched in basic and acidic residues. Residues 1 to 61 (MSSKKYELDA…ATDLLPPSKG (61 aa)) are disordered. Residues 1–92 (MSSKKYELDA…KTPSWLIYVR (92 aa)) are Cytoplasmic-facing. Residues 93–112 (GLWGPMPAALWIAIIIEFAL) traverse the membrane as a helical segment. The Extracellular segment spans residues 113–117 (ENWPD). Residues 118–137 (GAILFAIQIANATIGWYETI) form a helical membrane-spanning segment. Topologically, residues 138-264 (KAGDAVAALK…LGNIHVILRR (127 aa)) are cytoplasmic. A helical transmembrane segment spans residues 265–286 (VMFSLCAISFMLCMCCFIYLLA). Residues 287-294 (RFYETFRH) lie on the Extracellular side of the membrane. Residues 295 to 321 (ALQFAVVVLVVSIPIALEIVVTTTLAV) form a helical membrane-spanning segment. The Cytoplasmic portion of the chain corresponds to 322–630 (GSKHLSKHKI…AVHGATDAAR (309 aa)). The 4-aspartylphosphate intermediate role is filled by Asp-351. Positions 605 and 609 each coordinate Mg(2+). The helical transmembrane segment at 631 to 651 (AAADMVLTEPGLSVVVEAMLV) threads the bilayer. At 652–661 (SREVFQRMLS) the chain is on the extracellular side. A helical transmembrane segment spans residues 662–684 (FLTYRISATLQLVCFFFIACFSL). Residues 685 to 697 (TPKAYGSVDPHFQ) are Cytoplasmic-facing. The chain crosses the membrane as a helical span at residues 698 to 712 (FFHLPVLMFMLITLL). Residues 713–737 (NDGCLMTIGYDHVIPSERPQKWNLP) are Extracellular-facing. Asp-714 contributes to the Mg(2+) binding site. Residues 738-761 (VVFVSASILAAVACGSSLMLLWIG) traverse the membrane as a helical segment. Residues 762 to 812 (LEGYSSQYYENSWFHRLGLAQLPQGKLVTMMYLKISISDFLTLFSSRTGGH) lie on the Cytoplasmic side of the membrane. The helical transmembrane segment at 813–840 (FFFYMPPSPILFCGAIISLLVSTMAASF) threads the bilayer. Residues 841–868 (WHKSRPDNVLTEGLAWGQTNAEKLLPLW) lie on the Extracellular side of the membrane. Residues 869–887 (VWIYCIVWWFVQDVVKVLA) form a helical membrane-spanning segment. The Cytoplasmic portion of the chain corresponds to 888–974 (HICMDAVDLF…VNVYVSRDQK (87 aa)). Over residues 950-959 (GLREDTHSPI) the composition is skewed to basic and acidic residues. Positions 950–974 (GLREDTHSPIEEASPVNVYVSRDQK) are disordered.

It belongs to the cation transport ATPase (P-type) (TC 3.A.3) family. Type IIIA subfamily.

Its subcellular location is the membrane. The catalysed reaction is ATP + H2O + H(+)(in) = ADP + phosphate + 2 H(+)(out). The protein is Probable proton ATPase 1A (H1A) of Leishmania donovani.